The chain runs to 423 residues: Keratin, type I cytoskeletal 18 (423 aa).

Residue Ser-2 is modified to N-acetylserine. The head stretch occupies residues 2-71 (SFTTRSTTFS…GLAGMGGVQT (70 aa)). 4 positions are modified to phosphoserine: Ser-7, Ser-11, Ser-16, and Ser-19. Phosphoserine; alternate occurs at positions 31 and 32. O-linked (GlcNAc) serine; alternate glycans are attached at residues Ser-31 and Ser-32. Ser-35 carries the phosphoserine modification. At Tyr-37 the chain carries Phosphotyrosine. The residue at position 43 (Ser-43) is a Phosphoserine. Omega-N-methylarginine is present on Arg-46. Residue Ser-50 is modified to Phosphoserine; alternate. A glycan (O-linked (GlcNAc) serine; alternate) is linked at Ser-50. Ser-52 carries the phosphoserine; by MAPKAPK2 and MAPKAPK3 modification. Phosphoserine occurs at positions 57 and 60. The necessary for interaction with PNN stretch occupies residues 62-366 (GLAGMGGVQT…EALLNIKVKL (305 aa)). Residues 69 to 121 (VQTEKETMQDLNDRLASYLDKVKNLETENRRLESKIREYLEKRGPQGVRDWGH) form an interaction with TRADD region. The segment at 72–107 (EKETMQDLNDRLASYLDKVKNLETENRRLESKIREY) is coil 1A. Residues 72–384 (EKETMQDLND…RLLEDGDDFS (313 aa)) form the IF rod domain. Lys-73 is covalently cross-linked (Glycyl lysine isopeptide (Lys-Gly) (interchain with G-Cter in SUMO2)). Phosphoserine is present on Ser-85. Residues 108–125 (LEKRGPQGVRDWGHYFKT) form a linker 1 region. At Lys-124 the chain carries N6-acetyllysine. A coil 1B region spans residues 126-217 (IEDLRAQIFA…KNHEEEVQGL (92 aa)). 2 positions are modified to phosphoserine: Ser-137 and Ser-170. The segment at 218–241 (EAQIASSGLTVEVDAPKSQDLSKI) is linker 12. The tract at residues 236–384 (QDLSKIMADI…RLLEDGDDFS (149 aa)) is interaction with DNAJB6. Residue Lys-240 forms a Glycyl lysine isopeptide (Lys-Gly) (interchain with G-Cter in SUMO2) linkage. The coil 2 stretch occupies residues 242–380 (MADIRAQYEQ…ATYRRLLEDG (139 aa)). Thr-295 is modified (phosphothreonine). Glycyl lysine isopeptide (Lys-Gly) (interchain with G-Cter in SUMO2) cross-links involve residues Lys-363 and Lys-365. The tract at residues 381–423 (DDFSLNDALDSSNSMQTVQRTTTRKVVDGKVVSETNDTRVLRH) is tail. Residues Ser-384, Ser-391, Ser-392, and Ser-394 each carry the phosphoserine modification. Residue Thr-397 is modified to Phosphothreonine. Residue Lys-410 forms a Glycyl lysine isopeptide (Lys-Gly) (interchain with G-Cter in SUMO2) linkage.

Belongs to the intermediate filament family. Heterotetramer of two type I and two type II keratins. KRT18 associates with KRT8. Interacts with PNN and mutated CFTR. Interacts with YWHAE, YWHAH and YWHAZ only when phosphorylated. Interacts with DNAJB6, TCHP and TRADD. Interacts with the thrombin-antithrombin complex. Interacts with FAM83H. Interacts with EPPK1. Interacts with PKP1 and PKP2. In terms of processing, phosphorylation increases by IL-6. Proteolytically cleaved by caspases during epithelial cell apoptosis. Cleavage occurs at Asp-231 by either caspase-3, caspase-6 or caspase-7. Post-translationally, dephosphorylated by ethanol. In terms of processing, O-GlcNAcylation increases solubility, and decreases stability by inducing proteasomal degradation. Expressed on the plasma membrane of hepatocytes and in the narrow apical portions of supporting cells in the vomeronasal sensory epithelium. Detected in the type III alveolar cells of the lung, in the proliferative crypt epithelium of the small intestine and in the older intragemmal cells of the tongue.

The protein localises to the nucleus matrix. Its subcellular location is the cytoplasm. The protein resides in the perinuclear region. It is found in the nucleus. It localises to the nucleolus. In terms of biological role, when phosphorylated, plays a role in filament reorganization. Involved in the delivery of mutated CFTR to the plasma membrane. Together with KRT8, is involved in interleukin-6 (IL-6)-mediated barrier protection. Involved in the uptake of thrombin-antithrombin complexes by hepatic cells. This chain is Keratin, type I cytoskeletal 18, found in Rattus norvegicus (Rat).